Here is a 241-residue protein sequence, read N- to C-terminus: Pyridoxine 5'-phosphate synthase (241 aa).

Position 7 (Asn-7) interacts with 3-amino-2-oxopropyl phosphate. Residue Asp-9–His-10 participates in 1-deoxy-D-xylulose 5-phosphate binding. Arg-18 serves as a coordination point for 3-amino-2-oxopropyl phosphate. The active-site Proton acceptor is His-43. Residues Arg-45 and His-50 each coordinate 1-deoxy-D-xylulose 5-phosphate. The active-site Proton acceptor is the Glu-70. Residue Thr-100 participates in 1-deoxy-D-xylulose 5-phosphate binding. His-191 acts as the Proton donor in catalysis. 3-amino-2-oxopropyl phosphate-binding positions include Gly-192 and Gly-213–His-214.

The protein belongs to the PNP synthase family. Homooctamer; tetramer of dimers.

The protein localises to the cytoplasm. The enzyme catalyses 3-amino-2-oxopropyl phosphate + 1-deoxy-D-xylulose 5-phosphate = pyridoxine 5'-phosphate + phosphate + 2 H2O + H(+). It participates in cofactor biosynthesis; pyridoxine 5'-phosphate biosynthesis; pyridoxine 5'-phosphate from D-erythrose 4-phosphate: step 5/5. Its function is as follows. Catalyzes the complicated ring closure reaction between the two acyclic compounds 1-deoxy-D-xylulose-5-phosphate (DXP) and 3-amino-2-oxopropyl phosphate (1-amino-acetone-3-phosphate or AAP) to form pyridoxine 5'-phosphate (PNP) and inorganic phosphate. The polypeptide is Pyridoxine 5'-phosphate synthase (Solidesulfovibrio magneticus (strain ATCC 700980 / DSM 13731 / RS-1) (Desulfovibrio magneticus)).